The chain runs to 436 residues: 3-ketoacyl-CoA thiolase (436 aa).

Cys99 (acyl-thioester intermediate) is an active-site residue. Active-site proton acceptor residues include His392 and Cys422.

This sequence belongs to the thiolase-like superfamily. Thiolase family. Heterotetramer of two alpha chains (FadJ) and two beta chains (FadI).

Its subcellular location is the cytoplasm. The catalysed reaction is an acyl-CoA + acetyl-CoA = a 3-oxoacyl-CoA + CoA. Its pathway is lipid metabolism; fatty acid beta-oxidation. Functionally, catalyzes the final step of fatty acid oxidation in which acetyl-CoA is released and the CoA ester of a fatty acid two carbons shorter is formed. This chain is 3-ketoacyl-CoA thiolase, found in Shewanella woodyi (strain ATCC 51908 / MS32).